Consider the following 321-residue polypeptide: Pirin-like protein 2 (321 aa).

4 residues coordinate Fe cation: His-88, His-90, His-132, and Glu-134.

This sequence belongs to the pirin family. In terms of assembly, interacts with RD21A, RD21B and XCP2.

The protein resides in the cytoplasm. It is found in the cytosol. It localises to the nucleus. Its function is as follows. Involved in susceptibility to the bacterial plant pathogen Ralstonia solanacearum. Stabilizes the xylem cysteine protease XCP2 by blocking its autolysis. The polypeptide is Pirin-like protein 2 (Arabidopsis thaliana (Mouse-ear cress)).